A 348-amino-acid polypeptide reads, in one-letter code: Lysophosphatidic acid receptor 2 (348 aa).

Residues 1 to 30 are Extracellular-facing; the sequence is MGHCYYNETIGFFYNNSGKELSSHWRPKDV. N-linked (GlcNAc...) asparagine glycosylation is found at N7 and N15. The chain crosses the membrane as a helical span at residues 31–51; the sequence is VVVALGLTVSVLVLLTNLLVI. At 52–66 the chain is on the cytoplasmic side; that stretch reads AAIASNRRFHQPIYY. The chain crosses the membrane as a helical span at residues 67 to 87; sequence LLGNLAAADLFAGVAYLFLMF. At 88 to 104 the chain is on the extracellular side; the sequence is HTGPRTARLSLEGWFLR. Residues 105–124 form a helical membrane-spanning segment; that stretch reads QGLLDTSLTASVATLLAIAV. The Cytoplasmic segment spans residues 125 to 143; sequence ERRRSVMAVQLHSRLPRGR. The chain crosses the membrane as a helical span at residues 144–164; that stretch reads VVMLIVGVWVAALGLGLLPAH. Topologically, residues 165 to 185 are extracellular; it reads SWHCLCALDRCSRMAPLLSRS. The helical transmembrane segment at 186 to 206 threads the bilayer; it reads YLAVWALSSLLVFLLMVAVYT. The Cytoplasmic portion of the chain corresponds to 207–239; it reads RIFFYVRRRVQRMAEHVSCHPRYRETTLSLVKT. Residues 240 to 260 traverse the membrane as a helical segment; the sequence is VVIILGAFVVCWTPGQVVLLL. The Extracellular portion of the chain corresponds to 261-276; that stretch reads DGLGCKSCNVLAVEKY. The chain crosses the membrane as a helical span at residues 277–294; it reads FLLLAEANSLVNAAVYSC. The Cytoplasmic segment spans residues 295–348; that stretch reads RDAEMRRTFRRLLCCACLRRSTRESAHYTSSAQGGASTRIMLPENGHPLMDSTL. Residue C308 is the site of S-palmitoyl cysteine attachment. Residues 345-348 carry the PDZ-binding motif; the sequence is DSTL.

Belongs to the G-protein coupled receptor 1 family. In terms of assembly, interacts with SLC9A3R2/NHERF2, MAGI3 and PLCB3. Interacts with RALA and GRK2.

It is found in the cell surface. The protein resides in the cell membrane. In terms of biological role, receptor for lysophosphatidic acid (LPA), a mediator of diverse cellular activities. Seems to be coupled to the G(i)/G(o), G(12)/G(13), and G(q) families of heteromeric G proteins. Plays a key role in phospholipase C-beta (PLC-beta) signaling pathway. Stimulates phospholipase C (PLC) activity in a manner that is independent of RALA activation. This chain is Lysophosphatidic acid receptor 2, found in Macaca fascicularis (Crab-eating macaque).